Consider the following 380-residue polypeptide: Lipid-A-disaccharide synthase (380 aa).

It belongs to the LpxB family.

The enzyme catalyses a lipid X + a UDP-2-N,3-O-bis[(3R)-3-hydroxyacyl]-alpha-D-glucosamine = a lipid A disaccharide + UDP + H(+). It participates in bacterial outer membrane biogenesis; LPS lipid A biosynthesis. In terms of biological role, condensation of UDP-2,3-diacylglucosamine and 2,3-diacylglucosamine-1-phosphate to form lipid A disaccharide, a precursor of lipid A, a phosphorylated glycolipid that anchors the lipopolysaccharide to the outer membrane of the cell. The chain is Lipid-A-disaccharide synthase from Pseudomonas syringae pv. tomato (strain ATCC BAA-871 / DC3000).